Reading from the N-terminus, the 232-residue chain is MNLFDTIRNTIVPIHKEGYVFVAAFFVASLVLGWIAEPLFWVGLVLTAWCAYFFRDPERVTPQDDDLIISPADGKVSAVQSVVPPLELELGKEPMVRISVFMNVFNCHVNRAPVRGRIVNVAYRPGLFLNAEVDKASEDNERNGLVIETSHGKVGVVQIAGMVARRIVCWVKPNEPVDAGERFGLIRFGSRLDIFLPAGFEPRVSVGQTAIAGETVLAEFGSAKGPVLSRRG.

Residue Ser-190 is the Schiff-base intermediate with substrate; via pyruvic acid of the active site. Residue Ser-190 is modified to Pyruvic acid (Ser); by autocatalysis.

This sequence belongs to the phosphatidylserine decarboxylase family. PSD-A subfamily. As to quaternary structure, heterodimer of a large membrane-associated beta subunit and a small pyruvoyl-containing alpha subunit. It depends on pyruvate as a cofactor. Post-translationally, is synthesized initially as an inactive proenzyme. Formation of the active enzyme involves a self-maturation process in which the active site pyruvoyl group is generated from an internal serine residue via an autocatalytic post-translational modification. Two non-identical subunits are generated from the proenzyme in this reaction, and the pyruvate is formed at the N-terminus of the alpha chain, which is derived from the carboxyl end of the proenzyme. The post-translation cleavage follows an unusual pathway, termed non-hydrolytic serinolysis, in which the side chain hydroxyl group of the serine supplies its oxygen atom to form the C-terminus of the beta chain, while the remainder of the serine residue undergoes an oxidative deamination to produce ammonia and the pyruvoyl prosthetic group on the alpha chain.

It is found in the cell membrane. The enzyme catalyses a 1,2-diacyl-sn-glycero-3-phospho-L-serine + H(+) = a 1,2-diacyl-sn-glycero-3-phosphoethanolamine + CO2. The protein operates within phospholipid metabolism; phosphatidylethanolamine biosynthesis; phosphatidylethanolamine from CDP-diacylglycerol: step 2/2. Functionally, catalyzes the formation of phosphatidylethanolamine (PtdEtn) from phosphatidylserine (PtdSer). This is Phosphatidylserine decarboxylase proenzyme from Agrobacterium fabrum (strain C58 / ATCC 33970) (Agrobacterium tumefaciens (strain C58)).